The chain runs to 391 residues: tRNA-specific 2-thiouridylase MnmA (391 aa).

Residues 9-16 (GMSGGVDS) and Met35 each bind ATP. An interaction with target base in tRNA region spans residues 95 to 97 (NPD). The active-site Nucleophile is the Cys100. A disulfide bond links Cys100 and Cys196. Gly124 lines the ATP pocket. An interaction with tRNA region spans residues 146–148 (KDQ). Cys196 acts as the Cysteine persulfide intermediate in catalysis. The interaction with tRNA stretch occupies residues 308-309 (RY).

The protein belongs to the MnmA/TRMU family.

The protein resides in the cytoplasm. The enzyme catalyses S-sulfanyl-L-cysteinyl-[protein] + uridine(34) in tRNA + AH2 + ATP = 2-thiouridine(34) in tRNA + L-cysteinyl-[protein] + A + AMP + diphosphate + H(+). Functionally, catalyzes the 2-thiolation of uridine at the wobble position (U34) of tRNA, leading to the formation of s(2)U34. This chain is tRNA-specific 2-thiouridylase MnmA, found in Burkholderia orbicola (strain MC0-3).